Consider the following 414-residue polypeptide: Myb1 protein (414 aa).

Myb-like domains lie at 242–266 (WNEVSEKLSNNQNAKECQKMWLYYG), 268–320 (FEDD…IKIN), and 328–381 (KVKL…TNLN).

The protein resides in the nucleus. Functionally, transcriptional activator. Has a role in the parasite erythrocytic cycle where it directly regulates key genes involved in cell cycle regulation and progression. Binds directly to Myb regulatory elements. The polypeptide is Myb1 protein (Plasmodium falciparum (isolate 3D7)).